Here is a 736-residue protein sequence, read N- to C-terminus: Serine/threonine-protein kinase BRSK2 (736 aa).

The Protein kinase domain maps to Y19 to Y270. ATP contacts are provided by residues L25–V33 and K48. D141 acts as the Proton acceptor in catalysis. Phosphothreonine; by LKB1 is present on T174. The residue at position 260 (T260) is a Phosphothreonine; by PKA. Phosphoserine is present on S294. The UBA domain occupies D297–D339. A compositionally biased stretch (basic and acidic residues) spans P345–D366. Disordered stretches follow at residues P345 to W475 and H493 to S513. S367, S382, S393, S412, A416, S423, and S427 each carry phosphoserine. Residues S410–P428 show a composition bias toward low complexity. A compositionally biased stretch (pro residues) spans T431–K445. S455 carries the post-translational modification Phosphoserine. Phosphothreonine is present on residues T459, T463, and T509. Residues S512, S513, and S520 each carry the phosphoserine modification. A KEN box motif is present at residues K603–N605. Residues K681 to P736 form a disordered region. The segment covering G699 to G708 has biased composition (low complexity).

Belongs to the protein kinase superfamily. CAMK Ser/Thr protein kinase family. SNF1 subfamily. As to quaternary structure, interacts with FZR1, a regulatory subunit of the APC ubiquitin ligase complex. Interacts with COPS5. Interacts with PAK1. Mg(2+) serves as cofactor. In terms of processing, phosphorylated at Thr-174 by STK11/LKB1 in complex with STE20-related adapter-alpha (STRADA) pseudo kinase and CAB39. Not phosphorylated at Thr-174 by CaMKK2. In contrast, it is phosphorylated and activated by CaMKK1. May be inactivated via dephosphorylation of Thr-174 by PP2C. Phosphorylated at Thr-260 by PKA. Phosphorylation at Thr-260 by PKA was not observed in another study, but this may reflect differences in the experimental approach. Phosphorylation at Thr-260 seems to play a role in the regulation of insulin secretion. Polyubiquitinated by the APC complex in conjunction with FZR1, leading to its proteasomal degradation. Targeted for proteasomal degradation by interaction with COPS5. BRSK2 levels change during the cell cycle. BRSK2 levels are low at the G1/S boundary and gradually increase as cells progress into G2 phase. BRSK2 levels decrease rapidly at the end of mitosis. In terms of tissue distribution, detected in pancreas islets (at protein level).

It localises to the cytoplasm. Its subcellular location is the cytoskeleton. It is found in the microtubule organizing center. The protein localises to the centrosome. The protein resides in the perinuclear region. It localises to the endoplasmic reticulum. It catalyses the reaction L-seryl-[protein] + ATP = O-phospho-L-seryl-[protein] + ADP + H(+). The enzyme catalyses L-threonyl-[protein] + ATP = O-phospho-L-threonyl-[protein] + ADP + H(+). It carries out the reaction L-seryl-[tau protein] + ATP = O-phospho-L-seryl-[tau protein] + ADP + H(+). The catalysed reaction is L-threonyl-[tau protein] + ATP = O-phospho-L-threonyl-[tau protein] + ADP + H(+). With respect to regulation, activated by phosphorylation on Thr-174 by STK11/LKB1. In terms of biological role, serine/threonine-protein kinase that plays a key role in polarization of neurons and axonogenesis, cell cycle progress and insulin secretion. Phosphorylates CDK16, CDC25C, MAPT/TAU, PAK1 and WEE1. Following phosphorylation and activation by STK11/LKB1, acts as a key regulator of polarization of cortical neurons, probably by mediating phosphorylation of microtubule-associated proteins such as MAPT/TAU at 'Thr-529' and 'Ser-579'. Also regulates neuron polarization by mediating phosphorylation of WEE1 at 'Ser-642' in postmitotic neurons, leading to down-regulate WEE1 activity in polarized neurons. Plays a role in the regulation of the mitotic cell cycle progress and the onset of mitosis. Plays a role in the regulation of insulin secretion in response to elevated glucose levels, probably via phosphorylation of CDK16 and PAK1. While BRSK2 phosphorylated at Thr-174 can inhibit insulin secretion, BRSK2 phosphorylated at Thr-260 can promote insulin secretion. Regulates reorganization of the actin cytoskeleton. May play a role in the apoptotic response triggered by endoplasmic reticulum (ER) stress. This is Serine/threonine-protein kinase BRSK2 (BRSK2) from Homo sapiens (Human).